A 380-amino-acid chain; its full sequence is Cytochrome b (380 aa).

The next 4 helical transmembrane spans lie at 34–54 (FGSL…LLAT), 78–99 (WLIR…YLHI), 114–134 (WNTG…GYVL), and 179–199 (FFAL…IHLT). The heme b site is built by His-84 and His-98. Residues His-183 and His-197 each contribute to the heme b site. His-202 is an a ubiquinone binding site. A run of 4 helical transmembrane segments spans residues 227 to 247 (LKDI…ALFS), 289 to 309 (LGGV…PLLH), 321 to 341 (LSQL…WVGS), and 348 to 368 (FIII…LLFP).

Belongs to the cytochrome b family. In terms of assembly, the cytochrome bc1 complex contains 11 subunits: 3 respiratory subunits (MT-CYB, CYC1 and UQCRFS1), 2 core proteins (UQCRC1 and UQCRC2) and 6 low-molecular weight proteins (UQCRH/QCR6, UQCRB/QCR7, UQCRQ/QCR8, UQCR10/QCR9, UQCR11/QCR10 and a cleavage product of UQCRFS1). This cytochrome bc1 complex then forms a dimer. Requires heme b as cofactor.

The protein resides in the mitochondrion inner membrane. Functionally, component of the ubiquinol-cytochrome c reductase complex (complex III or cytochrome b-c1 complex) that is part of the mitochondrial respiratory chain. The b-c1 complex mediates electron transfer from ubiquinol to cytochrome c. Contributes to the generation of a proton gradient across the mitochondrial membrane that is then used for ATP synthesis. The protein is Cytochrome b (MT-CYB) of Cepphus grylle (Black guillemot).